A 431-amino-acid polypeptide reads, in one-letter code: Enolase (431 aa).

Glutamine 167 lines the (2R)-2-phosphoglycerate pocket. Glutamate 209 functions as the Proton donor in the catalytic mechanism. Mg(2+) is bound by residues aspartate 246, glutamate 289, and aspartate 316. The (2R)-2-phosphoglycerate site is built by lysine 341, arginine 370, serine 371, and lysine 392. Catalysis depends on lysine 341, which acts as the Proton acceptor.

It belongs to the enolase family. In terms of assembly, component of the RNA degradosome, a multiprotein complex involved in RNA processing and mRNA degradation. Mg(2+) serves as cofactor.

Its subcellular location is the cytoplasm. It localises to the secreted. The protein resides in the cell surface. It catalyses the reaction (2R)-2-phosphoglycerate = phosphoenolpyruvate + H2O. Its pathway is carbohydrate degradation; glycolysis; pyruvate from D-glyceraldehyde 3-phosphate: step 4/5. In terms of biological role, catalyzes the reversible conversion of 2-phosphoglycerate (2-PG) into phosphoenolpyruvate (PEP). It is essential for the degradation of carbohydrates via glycolysis. In Shewanella sediminis (strain HAW-EB3), this protein is Enolase.